A 29-amino-acid chain; its full sequence is Dermaseptin-J8 (29 aa).

In terms of tissue distribution, expressed by the skin glands.

Its subcellular location is the secreted. Functionally, has antimicrobial activity. The protein is Dermaseptin-J8 of Phasmahyla jandaia (Jandaia leaf frog).